Consider the following 245-residue polypeptide: MTKKIIIKIGGSAAEQLTPAFFDTIKYWQTQDTQIAIVHGGGDRISQLMSQLHEPIEKINGIRLTTQTGINITKMALLGQVQPALIEACRQQGIATIGLNAGSNQLLTGHLLDSDTYGYVGAIHQVNTQLIHQLWQQKLIPIIAPLAITNDGQWLNVNADHAATAIAKYLKADELYLLTDVSGVAVSGNILQELTPGKAKQLQDDHIITGGMIPKINSALHAVKRGVHNVHITDTVTHPGTIVTL.

Residues 41–42 (GG), Arg-63, and Asn-156 contribute to the substrate site.

The protein belongs to the acetylglutamate kinase family. ArgB subfamily.

It is found in the cytoplasm. The catalysed reaction is N-acetyl-L-glutamate + ATP = N-acetyl-L-glutamyl 5-phosphate + ADP. The protein operates within amino-acid biosynthesis; L-arginine biosynthesis; N(2)-acetyl-L-ornithine from L-glutamate: step 2/4. Catalyzes the ATP-dependent phosphorylation of N-acetyl-L-glutamate. The chain is Acetylglutamate kinase from Leuconostoc citreum (strain KM20).